The primary structure comprises 312 residues: Ribosomal protein L11 methyltransferase (312 aa).

The S-adenosyl-L-methionine site is built by Thr-163, Gly-184, Asp-206, and Asn-248.

The protein belongs to the methyltransferase superfamily. PrmA family.

Its subcellular location is the cytoplasm. It catalyses the reaction L-lysyl-[protein] + 3 S-adenosyl-L-methionine = N(6),N(6),N(6)-trimethyl-L-lysyl-[protein] + 3 S-adenosyl-L-homocysteine + 3 H(+). In terms of biological role, methylates ribosomal protein L11. In Clostridium botulinum (strain Loch Maree / Type A3), this protein is Ribosomal protein L11 methyltransferase.